The primary structure comprises 643 residues: Maternal embryonic leucine zipper kinase (643 aa).

Residues 11-263 (YELYETIGTG…MRNLLNHPWV (253 aa)) form the Protein kinase domain. ATP contacts are provided by residues 17–25 (IGTGGFAKV) and Lys40. Thr56 carries the phosphothreonine; by autocatalysis modification. Asp132 functions as the Proton acceptor in the catalytic mechanism. Tyr163 carries the phosphotyrosine; by autocatalysis modification. Thr167 carries the phosphothreonine; by autocatalysis modification. Phosphoserine; by autocatalysis is present on residues Ser171 and Ser253. The tract at residues 282 to 321 (LDEDCVTELSVHHRSSRQTMEDLISSWQYDHLTATYLLLL) is UBA-like. The segment at 326-643 (RGKPARLQLL…VEDILSGCKM (318 aa)) is autoinhibitory region. Residues Ser336 and Ser343 each carry the phosphoserine; by autocatalysis modification. Ser352 carries the post-translational modification Phosphoserine. A phosphoserine; by autocatalysis mark is found at Ser399 and Ser423. Thr486 bears the Phosphothreonine; by autocatalysis mark. Phosphoserine is present on Ser490. Position 497 is a phosphoserine; by autocatalysis (Ser497). A Phosphothreonine modification is found at Thr510. At Ser521 the chain carries Phosphoserine; by autocatalysis. A Phosphothreonine; by autocatalysis modification is found at Thr531. The 50-residue stretch at 594 to 643 (SDFGKVTMQFELEVCQLQRPDVVGIRRQRLKGDAWVYKRLVEDILSGCKM) folds into the KA1 domain.

Belongs to the protein kinase superfamily. CAMK Ser/Thr protein kinase family. SNF1 subfamily. Monomer. Interacts with ZNF622 and PPP1R8. In terms of processing, autophosphorylated: autophosphorylation of the T-loop at Thr-167 and Ser-171 is required for activation. In terms of tissue distribution, expressed in testis, ovary, thymus, spleen and T-cell. Expressed by neural progenitors: highly enriched in cultures containing multipotent progenitors.

Its subcellular location is the cell membrane. The catalysed reaction is L-tyrosyl-[protein] + ATP = O-phospho-L-tyrosyl-[protein] + ADP + H(+). The enzyme catalyses L-seryl-[protein] + ATP = O-phospho-L-seryl-[protein] + ADP + H(+). It carries out the reaction L-threonyl-[protein] + ATP = O-phospho-L-threonyl-[protein] + ADP + H(+). With respect to regulation, activated by autophosphorylation of the T-loop at Thr-167 and Ser-171: in contrast to other members of the SNF1 subfamily, phosphorylation at Thr-167 is not mediated by STK11/LKB1 but via autophosphorylation instead. Inhibited by calcium-binding. Kinase activity is also regulated by reducing agents: dithiothreitol (DTT) or reduced glutathione are required for kinase activity in vitro; such dependence is however not due to the presence of disulfide bonds. In terms of biological role, serine/threonine-protein kinase involved in various processes such as cell cycle regulation, self-renewal of stem cells, apoptosis and splicing regulation. Has a broad substrate specificity; phosphorylates BCL2L14, CDC25B, MAP3K5/ASK1 and ZNF622. Acts as an activator of apoptosis by phosphorylating and activating MAP3K5/ASK1. Acts as a regulator of cell cycle, notably by mediating phosphorylation of CDC25B, promoting localization of CDC25B to the centrosome and the spindle poles during mitosis. Plays a key role in cell proliferation. Required for proliferation of embryonic and postnatal multipotent neural progenitors. Phosphorylates and inhibits BCL2L14. Also involved in the inhibition of spliceosome assembly during mitosis by phosphorylating ZNF622, thereby contributing to its redirection to the nucleus. May also play a role in primitive hematopoiesis. The protein is Maternal embryonic leucine zipper kinase (Melk) of Mus musculus (Mouse).